The chain runs to 646 residues: MAQISLTFPDGKAREFPAGITPAEVAASISTSLGKKAISASVDGRHYDLQWPIETDAKIAIHTMADEAQALELIRHDLAHIMARAVQELWPDVKVTIGPVVANGWYYDFDREETFTPEDLGAIEKRMKEIINAREAVKTELWERARAIAYYEERGEPFKVELVQAIPEDQSIRMYWHGGWQDLCRGPHLQHTGQVPADAFKLMSVAGAYWRGDSANKQLQRIYGVAFKTRDELKAYLHMLEEAAKRDHRKLGREMELFHLQEEAPGMVFWHPNGWQIYRTLEDYMRGRLRQAGYKEIRTPQVVDRKLWEASGHWEAYKENMFIVEVEEEHAKEKRINALKPMNCPCHVQVYNQGLKSYRDLPLRLAEFGSCHRYESSGSMHGLMRVRGFVQDDAHIFCTEDQIESECAAFIELLSSVYKDLGFDSFEIKLSTRPEVRIGSDEAWDKVETALENAIRKVGAAYEIDPGEGAFYGPKLDFKLTDAIGRKWQCGTFQVDPNLPTRLGAEYIGEDGAKHRPYMLHRAILGSFERFIGILIENYAGKLPFWLAPRQVVVASIVSDADPYVAEVVAALRARGVRAEADTRNEKINYKVREHSVGKVPVILAIGMQEVEARSVSVRRLGETRTESMGLDQVVDQLAADARIPG.

Residues 1–63 (MAQISLTFPD…ETDAKIAIHT (63 aa)) enclose the TGS domain. The segment at 247-544 (DHRKLGREME…LIENYAGKLP (298 aa)) is catalytic. Zn(2+) is bound by residues Cys-344, His-395, and His-521.

Belongs to the class-II aminoacyl-tRNA synthetase family. Homodimer. Requires Zn(2+) as cofactor.

It localises to the cytoplasm. The enzyme catalyses tRNA(Thr) + L-threonine + ATP = L-threonyl-tRNA(Thr) + AMP + diphosphate + H(+). Catalyzes the attachment of threonine to tRNA(Thr) in a two-step reaction: L-threonine is first activated by ATP to form Thr-AMP and then transferred to the acceptor end of tRNA(Thr). Also edits incorrectly charged L-seryl-tRNA(Thr). This is Threonine--tRNA ligase from Cereibacter sphaeroides (strain ATCC 17023 / DSM 158 / JCM 6121 / CCUG 31486 / LMG 2827 / NBRC 12203 / NCIMB 8253 / ATH 2.4.1.) (Rhodobacter sphaeroides).